We begin with the raw amino-acid sequence, 798 residues long: uncharacterized protein (798 aa).

A compositionally biased stretch (low complexity) spans 1-13 (MSSSQSPSTPSAS). Residues 1–58 (MSSSQSPSTPSASLVDSSDSKHPDDLPQIYKRRSVWTSSEDAVSSSNSPEQTTPFTVR) constitute a chloroplast transit peptide. 3 disordered regions span residues 1-99 (MSSS…WQDA), 135-158 (AEKKKRKKKKKAVMPNPPGSSMCT), and 417-473 (TGLI…AEPS). A compositionally biased stretch (polar residues) spans 35 to 55 (VWTSSEDAVSSSNSPEQTTPF). Positions 57–79 (VREDTNADIARELDLPDDPEPHL) are enriched in basic and acidic residues. Over residues 137 to 146 (KKKRKKKKKA) the composition is skewed to basic residues. Positions 462–473 (AAPAEAQGAEPS) are enriched in low complexity. The stretch at 578 to 658 (RSNMEVAGKL…MLSEARGLRD (81 aa)) forms a coiled coil. The tract at residues 749–798 (DDLKAPAPEPAPLSPGGHRSVESLADEAGITDQAGSLLPAKDNRPSEDLD) is disordered. Serine 762 carries the post-translational modification Phosphoserine. Residues 789-798 (KDNRPSEDLD) show a composition bias toward basic and acidic residues.

It localises to the plastid. Its subcellular location is the chloroplast. This is an uncharacterized protein from Arabidopsis thaliana (Mouse-ear cress).